A 35-amino-acid polypeptide reads, in one-letter code: Phospholipase A2 neuwieditoxin-1 (35 aa).

Ca(2+)-binding residues include Y27, G29, and G31.

Belongs to the phospholipase A2 family. Group II subfamily. D49 sub-subfamily. In terms of assembly, dimer. Ca(2+) serves as cofactor. As to expression, expressed by the venom gland.

The protein resides in the secreted. The enzyme catalyses a 1,2-diacyl-sn-glycero-3-phosphocholine + H2O = a 1-acyl-sn-glycero-3-phosphocholine + a fatty acid + H(+). Functionally, snake venom phospholipase A2 (PLA2) that shows presynaptic neurotoxicity. 10 ug/ml of this protein produce complete neuromuscular blockade up to 80 minutes, without inhibiting the responses to acetylcholine (ACh) and potassium chloride (KCl). In addition, it produces a calcium-dependent blockade of acetylcholine release and causes appearance of giant miniature end-plate potentials. PLA2 catalyzes the calcium-dependent hydrolysis of the 2-acyl groups in 3-sn-phosphoglycerides. This is Phospholipase A2 neuwieditoxin-1 from Bothrops pauloensis (Neuwied's lancehead).